Consider the following 238-residue polypeptide: Uridylate kinase (238 aa).

An ATP-binding site is contributed by 12–15 (KLSG). Glycine 54 serves as a coordination point for UMP. ATP-binding residues include glycine 55 and arginine 59. Residues aspartate 74 and 135 to 142 (TGNPFFTT) contribute to the UMP site. ATP contacts are provided by threonine 162, tyrosine 168, and aspartate 171.

It belongs to the UMP kinase family. As to quaternary structure, homohexamer.

The protein localises to the cytoplasm. It carries out the reaction UMP + ATP = UDP + ADP. It participates in pyrimidine metabolism; CTP biosynthesis via de novo pathway; UDP from UMP (UMPK route): step 1/1. Inhibited by UTP. In terms of biological role, catalyzes the reversible phosphorylation of UMP to UDP. The protein is Uridylate kinase of Bordetella avium (strain 197N).